Here is a 384-residue protein sequence, read N- to C-terminus: MTVTLGMPTAPARPLGTRRHSRQIHVGNVLVGGDAPVSVQSMCTTLTSDVNATLQQIAQLTASGCQIVRVAVPSQDDADALAAIARKSPIPVIADIHFQPKYVFAAIDAGCAAVRVNPGNIKAFDDKVGEIARAAKAAGVPIRIGVNAGSLDKRLLAKYGKATPEALTESALWECSLFEEHDFRDIKISVKHHDPVVMIQAYRLLAQACDYPLHLGVTEAGPSFQGTVKSAVAFGALLAEGIGDTIRVSLSAPPVEEVKVGTAILESLGLRQRKLEIVSCPSCGRAQVDVYTLANQVSAGLEGMEVPLRVAVMGCVVNGPGEAREADLGVASGNGKGQIFVRGEVVKTVPEAQIVETLIEEAMRLAEEMAADGTPSGEPSVSVG.

The [4Fe-4S] cluster site is built by Cys-280, Cys-283, Cys-315, and Glu-322.

The protein belongs to the IspG family. The cofactor is [4Fe-4S] cluster.

It catalyses the reaction (2E)-4-hydroxy-3-methylbut-2-enyl diphosphate + oxidized [flavodoxin] + H2O + 2 H(+) = 2-C-methyl-D-erythritol 2,4-cyclic diphosphate + reduced [flavodoxin]. It functions in the pathway isoprenoid biosynthesis; isopentenyl diphosphate biosynthesis via DXP pathway; isopentenyl diphosphate from 1-deoxy-D-xylulose 5-phosphate: step 5/6. In terms of biological role, converts 2C-methyl-D-erythritol 2,4-cyclodiphosphate (ME-2,4cPP) into 1-hydroxy-2-methyl-2-(E)-butenyl 4-diphosphate. The sequence is that of 4-hydroxy-3-methylbut-2-en-1-yl diphosphate synthase (flavodoxin) from Frankia casuarinae (strain DSM 45818 / CECT 9043 / HFP020203 / CcI3).